The primary structure comprises 425 residues: Serine--tRNA ligase (425 aa).

Residue 231 to 233 participates in L-serine binding; the sequence is TAE. Residue 262–264 participates in ATP binding; that stretch reads RSE. L-serine is bound at residue Glu-285. 349–352 contributes to the ATP binding site; the sequence is EISS. An L-serine-binding site is contributed by Ser-385.

Belongs to the class-II aminoacyl-tRNA synthetase family. Type-1 seryl-tRNA synthetase subfamily. In terms of assembly, homodimer. The tRNA molecule binds across the dimer.

The protein localises to the cytoplasm. It catalyses the reaction tRNA(Ser) + L-serine + ATP = L-seryl-tRNA(Ser) + AMP + diphosphate + H(+). The catalysed reaction is tRNA(Sec) + L-serine + ATP = L-seryl-tRNA(Sec) + AMP + diphosphate + H(+). The protein operates within aminoacyl-tRNA biosynthesis; selenocysteinyl-tRNA(Sec) biosynthesis; L-seryl-tRNA(Sec) from L-serine and tRNA(Sec): step 1/1. Functionally, catalyzes the attachment of serine to tRNA(Ser). Is also able to aminoacylate tRNA(Sec) with serine, to form the misacylated tRNA L-seryl-tRNA(Sec), which will be further converted into selenocysteinyl-tRNA(Sec). This chain is Serine--tRNA ligase, found in Halalkalibacterium halodurans (strain ATCC BAA-125 / DSM 18197 / FERM 7344 / JCM 9153 / C-125) (Bacillus halodurans).